The primary structure comprises 215 residues: Thiamine import ATP-binding protein ThiQ (215 aa).

Residues 2 to 215 (IYLNNVILND…GQISQLQKGV (214 aa)) enclose the ABC transporter domain. Residue 32 to 39 (GESGAGKS) coordinates ATP.

This sequence belongs to the ABC transporter superfamily. Thiamine importer (TC 3.A.1.19.1) family. The complex is composed of two ATP-binding proteins (ThiQ), two transmembrane proteins (ThiP) and a solute-binding protein (ThiB).

The protein resides in the cell inner membrane. It carries out the reaction thiamine(out) + ATP + H2O = thiamine(in) + ADP + phosphate + H(+). In terms of biological role, part of the ABC transporter complex ThiBPQ involved in thiamine import. Responsible for energy coupling to the transport system. This chain is Thiamine import ATP-binding protein ThiQ, found in Haemophilus influenzae (strain ATCC 51907 / DSM 11121 / KW20 / Rd).